The primary structure comprises 202 residues: Methylthioribulose-1-phosphate dehydratase (202 aa).

2 residues coordinate Zn(2+): His-93 and His-95.

The protein belongs to the aldolase class II family. MtnB subfamily. Zn(2+) serves as cofactor.

It carries out the reaction 5-(methylsulfanyl)-D-ribulose 1-phosphate = 5-methylsulfanyl-2,3-dioxopentyl phosphate + H2O. It participates in amino-acid biosynthesis; L-methionine biosynthesis via salvage pathway; L-methionine from S-methyl-5-thio-alpha-D-ribose 1-phosphate: step 2/6. Functionally, catalyzes the dehydration of methylthioribulose-1-phosphate (MTRu-1-P) into 2,3-diketo-5-methylthiopentyl-1-phosphate (DK-MTP-1-P). This is Methylthioribulose-1-phosphate dehydratase from Klebsiella pneumoniae (strain 342).